Consider the following 675-residue polypeptide: MTGRLGIDDVRPRILDGNPAKAVVGEIVPVSAIVWREGHDAIAATLNVSGPEDSSVAAEPIQIHMRPTPDNQDQSNAFFVPDVPGNWTFRVDAWSDPMATWRHAITTKIEAGQGSDELYNDFEHGAQLFERAAENLSKEDRTALFDVASSLRRGGDVRARLAPALTASVTHLLELNPLRELVTMGENLQVRVERRAALVNSWYELFPRSTGGWDESGTPVHGTFATTAQALERVAKMGFDTVYFPPIHPIGEVNRKGRNNTLTPEPHDVGSPWAIGSKDGGHDATHPRLGTIEDFQALLARARELNLEVALDLALQAAPDHPWAQEHREFFTVLADGTIAYAENPPKKYQDIYPINFDNDAPKIYEEVYRVVKFWVDLGVTTFRVDNPHTKPANFWQWLISAIHKSNPEVIFLAEAFTRPARLYGLAKIGFSQSYTYFTWKVTKEELTEFATEIARMADISRPNLFVNTPDILHASLQHGGRAMFAIRAALAATMSPVWGVYSGYELFEHEAVKPGSEEYLDSEKYELRPRDFEGALERGDSLEDYIALLNQIRRANPALQQLRNIHFHEADNDQIIAYSKVDALTGNTVLIVVNLDPRSAREATVRLDLGALGLEAGAQFEVRDAITGSRYLWSETNFVRLEPLRDVAHIFVLPELPASRRERLAWREIKTYRA.

Alpha-maltose 1-phosphate contacts are provided by Lys-256, Gln-316, and Asp-351. Residue Asp-386 is the Nucleophile of the active site. Residue Asn-387 coordinates alpha-maltose 1-phosphate. The active-site Proton donor is the Glu-415. 525–526 (KY) is an alpha-maltose 1-phosphate binding site.

The protein belongs to the glycosyl hydrolase 13 family. GlgE subfamily. As to quaternary structure, homodimer.

It carries out the reaction alpha-maltose 1-phosphate + [(1-&gt;4)-alpha-D-glucosyl](n) = [(1-&gt;4)-alpha-D-glucosyl](n+2) + phosphate. Functionally, maltosyltransferase that uses maltose 1-phosphate (M1P) as the sugar donor to elongate linear or branched alpha-(1-&gt;4)-glucans. Is involved in a branched alpha-glucan biosynthetic pathway from trehalose, together with TreS, Mak and GlgB. The protein is Alpha-1,4-glucan:maltose-1-phosphate maltosyltransferase of Corynebacterium glutamicum (strain ATCC 13032 / DSM 20300 / JCM 1318 / BCRC 11384 / CCUG 27702 / LMG 3730 / NBRC 12168 / NCIMB 10025 / NRRL B-2784 / 534).